The following is a 527-amino-acid chain: Peptide chain release factor 3 (527 aa).

Residues 9-277 form the tr-type G domain; that stretch reads AKRRTFAIIS…AVVDWAPRPL (269 aa). GTP contacts are provided by residues 18-25, 86-90, and 140-143; these read SHPDAGKT, DTPGH, and NKLD.

This sequence belongs to the TRAFAC class translation factor GTPase superfamily. Classic translation factor GTPase family. PrfC subfamily.

It localises to the cytoplasm. Increases the formation of ribosomal termination complexes and stimulates activities of RF-1 and RF-2. It binds guanine nucleotides and has strong preference for UGA stop codons. It may interact directly with the ribosome. The stimulation of RF-1 and RF-2 is significantly reduced by GTP and GDP, but not by GMP. In Ectopseudomonas mendocina (strain ymp) (Pseudomonas mendocina), this protein is Peptide chain release factor 3.